A 273-amino-acid chain; its full sequence is Flagellin FljM (273 aa).

The protein belongs to the bacterial flagellin family. In C.crescentus, the flagellar filament is composed of multiple flagellins of 29 kDa; 27 kDa and 25 kDa.

It localises to the secreted. The protein localises to the bacterial flagellum. Its function is as follows. Flagellin is the subunit protein which polymerizes to form the filaments of bacterial flagella. This Caulobacter vibrioides (strain ATCC 19089 / CIP 103742 / CB 15) (Caulobacter crescentus) protein is Flagellin FljM (fljM).